The chain runs to 65 residues: Large ribosomal subunit protein bL35 (65 aa).

It belongs to the bacterial ribosomal protein bL35 family.

The chain is Large ribosomal subunit protein bL35 from Laribacter hongkongensis (strain HLHK9).